A 662-amino-acid polypeptide reads, in one-letter code: uncharacterized protein (662 aa).

Transmembrane regions (helical) follow at residues 10–30 (SSIV…GWPV), 46–66 (PVIG…FLPI), 68–88 (AINL…LSKG), 101–121 (GFCW…EIIP), 167–187 (LIYY…TGAT), 193–213 (IALT…LAVA), 217–237 (SAYA…KPAV), 263–283 (PWVP…MAYL), 285–305 (ILYS…AILA), 312–332 (MWAG…LSVS), 342–362 (EVLI…AVLI), 373–393 (KVVE…LDIP), 394–414 (GFWL…FLIW), 432–452 (ALTV…SVIM), 460–480 (VLIP…STTI), and 485–505 (LVGR…ILVG).

It localises to the cell membrane. This is an uncharacterized protein from Sinorhizobium fredii (strain NBRC 101917 / NGR234).